The following is a 63-amino-acid chain: Toxin S6C6 (63 aa).

5 disulfides stabilise this stretch: Cys3–Cys24, Cys6–Cys11, Cys17–Cys39, Cys43–Cys55, and Cys56–Cys61.

This sequence belongs to the three-finger toxin family. Ancestral subfamily. Orphan group XIX sub-subfamily. As to expression, expressed by the venom gland.

Its subcellular location is the secreted. Functionally, may enhance presynaptic acetylcholine release. This is Toxin S6C6 from Dendroaspis jamesoni kaimosae (Eastern Jameson's mamba).